A 241-amino-acid chain; its full sequence is MRSGVIAQKVGMTRVFTEAGEHIPVTVLKLGNCQVVAHRTTEKNGYVALQLGSGARKTVYMPKAERGQFAVAKVEPKRKVAEFRVSEDALIPVGAEIQADHFVVGQFVDVTGTSTGKGFAGGMKRWNFGGLRATHGVSVSHRSIGSTGGRQDPGKTFKNKKMPGHMGVDRITTLNLRVVQTDVERGLILVEGAVPGSKGGWISVRDAVKKALPADAPKPGKFRLANGGDEVAAPAAEQEGA.

2 disordered regions span residues 139–164 (VSHRSIGSTGGRQDPGKTFKNKKMPG) and 215–241 (DAPKPGKFRLANGGDEVAAPAAEQEGA). Gln-151 is modified (N5-methylglutamine).

The protein belongs to the universal ribosomal protein uL3 family. Part of the 50S ribosomal subunit. Forms a cluster with proteins L14 and L19. Methylated by PrmB.

One of the primary rRNA binding proteins, it binds directly near the 3'-end of the 23S rRNA, where it nucleates assembly of the 50S subunit. The protein is Large ribosomal subunit protein uL3 of Rhodopseudomonas palustris (strain BisB5).